Reading from the N-terminus, the 261-residue chain is Cytochrome c oxidase subunit 3 (261 aa).

Over 1–15 (MTHQTHAYHMVNPSP) the chain is Mitochondrial matrix. A helical transmembrane segment spans residues 16–34 (WPLTGALSALLMTSGLAMW). Topologically, residues 35 to 40 (FHYNLT) are mitochondrial intermembrane. A helical transmembrane segment spans residues 41–66 (LLLTLGMTTNLLTMYQWWRDIIREST). At 67-72 (FQGHHT) the chain is on the mitochondrial matrix side. Residues 73-105 (PIVQKGLRYGMILFIISEVFFFAGFFWAFYHSS) traverse the membrane as a helical segment. Residues 106–128 (LAPTPELGGCWPPTGIIPLNPLE) lie on the Mitochondrial intermembrane side of the membrane. A helical membrane pass occupies residues 129 to 152 (VPLLNTSVLLASGVSITWAHHSLM). Residues 153 to 155 (EGN) are Mitochondrial matrix-facing. A helical transmembrane segment spans residues 156–183 (RKHMLQALFITISLGVYFTLLQASEYYE). The Mitochondrial intermembrane segment spans residues 184 to 190 (TSFTISD). The chain crosses the membrane as a helical span at residues 191-223 (GVYGSTFFMATGFHGLHVIIGSTFLIVCFLRQL). Residues 224-232 (KYHFTSNHH) are Mitochondrial matrix-facing. The chain crosses the membrane as a helical span at residues 233–256 (FGFEAAAWYWHFVDVVWLFLYVSI). The Mitochondrial intermembrane segment spans residues 257–261 (YWWGS).

This sequence belongs to the cytochrome c oxidase subunit 3 family. As to quaternary structure, component of the cytochrome c oxidase (complex IV, CIV), a multisubunit enzyme composed of 14 subunits. The complex is composed of a catalytic core of 3 subunits MT-CO1, MT-CO2 and MT-CO3, encoded in the mitochondrial DNA, and 11 supernumerary subunits COX4I, COX5A, COX5B, COX6A, COX6B, COX6C, COX7A, COX7B, COX7C, COX8 and NDUFA4, which are encoded in the nuclear genome. The complex exists as a monomer or a dimer and forms supercomplexes (SCs) in the inner mitochondrial membrane with NADH-ubiquinone oxidoreductase (complex I, CI) and ubiquinol-cytochrome c oxidoreductase (cytochrome b-c1 complex, complex III, CIII), resulting in different assemblies (supercomplex SCI(1)III(2)IV(1) and megacomplex MCI(2)III(2)IV(2)).

It localises to the mitochondrion inner membrane. It carries out the reaction 4 Fe(II)-[cytochrome c] + O2 + 8 H(+)(in) = 4 Fe(III)-[cytochrome c] + 2 H2O + 4 H(+)(out). Component of the cytochrome c oxidase, the last enzyme in the mitochondrial electron transport chain which drives oxidative phosphorylation. The respiratory chain contains 3 multisubunit complexes succinate dehydrogenase (complex II, CII), ubiquinol-cytochrome c oxidoreductase (cytochrome b-c1 complex, complex III, CIII) and cytochrome c oxidase (complex IV, CIV), that cooperate to transfer electrons derived from NADH and succinate to molecular oxygen, creating an electrochemical gradient over the inner membrane that drives transmembrane transport and the ATP synthase. Cytochrome c oxidase is the component of the respiratory chain that catalyzes the reduction of oxygen to water. Electrons originating from reduced cytochrome c in the intermembrane space (IMS) are transferred via the dinuclear copper A center (CU(A)) of subunit 2 and heme A of subunit 1 to the active site in subunit 1, a binuclear center (BNC) formed by heme A3 and copper B (CU(B)). The BNC reduces molecular oxygen to 2 water molecules using 4 electrons from cytochrome c in the IMS and 4 protons from the mitochondrial matrix. The protein is Cytochrome c oxidase subunit 3 (MT-CO3) of Felis catus (Cat).